The following is a 214-amino-acid chain: Uridine kinase (214 aa).

15 to 22 is a binding site for ATP; sequence GASASGKS.

It belongs to the uridine kinase family.

It is found in the cytoplasm. The enzyme catalyses uridine + ATP = UMP + ADP + H(+). It catalyses the reaction cytidine + ATP = CMP + ADP + H(+). Its pathway is pyrimidine metabolism; CTP biosynthesis via salvage pathway; CTP from cytidine: step 1/3. It participates in pyrimidine metabolism; UMP biosynthesis via salvage pathway; UMP from uridine: step 1/1. The protein is Uridine kinase of Tolumonas auensis (strain DSM 9187 / NBRC 110442 / TA 4).